The following is a 321-amino-acid chain: MTKYALVGDVGGTNARLALCDIASGEISQAKTYSGLDYPSLEAVIRVYLEEHKVEVKDGCIAIACPITGDWVAMTNHTWAFSIAEMKKNLGFSHLEIINDFTAVSMAIPMLKKEHLIQFGGAEPVEGKPIAVYGAGTGLGVAHLVHVDKRWVSLPGEGGHVDFAPNSEEEAIILEILRAEIGHVSAERVLSGPGLVNLYRAIVKADNRLPENLKPKDITERALADSCTDCRRALSLFCVIMGRFGGNLALNLGTFGGVFIAGGIVPRFLEFFKASGFRAAFEDKGRFKEYVHDIPVYLIVHDNAGLLGSGAHLRQTLGHIL.

8–13 provides a ligand contact to ATP; sequence GDVGGT.

It belongs to the bacterial glucokinase family.

The protein resides in the cytoplasm. It carries out the reaction D-glucose + ATP = D-glucose 6-phosphate + ADP + H(+). This is Glucokinase from Shigella dysenteriae serotype 1 (strain Sd197).